Here is a 292-residue protein sequence, read N- to C-terminus: N-acetylneuraminate lyase (292 aa).

Positions 47 and 48 each coordinate aceneuramate. Residue Tyr136 is the Proton donor of the active site. Lys164 serves as the catalytic Schiff-base intermediate with substrate. Aceneuramate-binding residues include Thr166, Gly188, Asp190, Glu191, and Ser207.

This sequence belongs to the DapA family. NanA subfamily. In terms of assembly, homotetramer.

Its subcellular location is the cytoplasm. It catalyses the reaction aceneuramate = aldehydo-N-acetyl-D-mannosamine + pyruvate. The protein operates within amino-sugar metabolism; N-acetylneuraminate degradation; D-fructose 6-phosphate from N-acetylneuraminate: step 1/5. In terms of biological role, catalyzes the reversible aldol cleavage of N-acetylneuraminic acid (sialic acid; Neu5Ac) to form pyruvate and N-acetylmannosamine (ManNAc) via a Schiff base intermediate. This is N-acetylneuraminate lyase from Histophilus somni (strain 129Pt) (Haemophilus somnus).